Reading from the N-terminus, the 137-residue chain is Basic phospholipase A2 beta-bungarotoxin A1 chain (137 aa).

Residues 1 to 9 form the signal peptide; sequence AVCVSLLGA. Residues 10-17 constitute a propeptide that is removed on maturation; it reads ANIPPHPL. 6 disulfides stabilise this stretch: Cys-44/Cys-136, Cys-46/Cys-62, Cys-61/Cys-117, Cys-68/Cys-110, Cys-78/Cys-103, and Cys-96/Cys-108. The Ca(2+) site is built by Tyr-45, Gly-47, and Gly-49. His-65 is a catalytic residue. Residue Asp-66 participates in Ca(2+) binding. Residue Asp-111 is part of the active site.

It belongs to the phospholipase A2 family. Group I subfamily. D49 sub-subfamily. Heterodimer; disulfide-linked. The A chain has phospholipase A2 activity and the B chain shows homology with the basic protease inhibitors. Ca(2+) is required as a cofactor. As to expression, expressed by the venom gland.

It is found in the secreted. The catalysed reaction is a 1,2-diacyl-sn-glycero-3-phosphocholine + H2O = a 1-acyl-sn-glycero-3-phosphocholine + a fatty acid + H(+). In terms of biological role, snake venom phospholipase A2 (PLA2) that shows presynaptic neurotoxicity. The A chain has phospholipase activity. PLA2 catalyzes the calcium-dependent hydrolysis of the 2-acyl groups in 3-sn-phosphoglycerides. The protein is Basic phospholipase A2 beta-bungarotoxin A1 chain of Bungarus candidus (Malayan krait).